The sequence spans 326 residues: Vitamin B12 import system permease protein BtuC (326 aa).

9 helical membrane-spanning segments follow: residues 15 to 35, 61 to 81, 88 to 108, 112 to 132, 146 to 166, 184 to 204, 240 to 260, 274 to 294, and 302 to 322; these read WLLCLSVLMLLALLLSLCAGE, LAVLLVGAALAISGAVMQALF, PGLLGVSNGAGVGLIAAVLLG, LPNWALGLCAIAGALIITLIL, LLAGVALGIICSALMTWAIYF, GGVDWRQSWLMLALIPVLLWI, GWMVGVSVALAGAIGFIGLVI, VLLPGCALAGASALLLADIVA, and ELPIGVVTATLGAPVFIWLLL.

This sequence belongs to the binding-protein-dependent transport system permease family. FecCD subfamily. In terms of assembly, the complex is composed of two ATP-binding proteins (BtuD), two transmembrane proteins (BtuC) and a solute-binding protein (BtuF).

It localises to the cell inner membrane. Functionally, part of the ABC transporter complex BtuCDF involved in vitamin B12 import. Involved in the translocation of the substrate across the membrane. In Escherichia coli O7:K1 (strain IAI39 / ExPEC), this protein is Vitamin B12 import system permease protein BtuC.